Reading from the N-terminus, the 217-residue chain is Uracil phosphoribosyltransferase (217 aa).

Residues Arg84, Arg109, and 137–145 (DPMLATGGS) each bind 5-phospho-alpha-D-ribose 1-diphosphate. Uracil contacts are provided by residues Ile202 and 207-209 (GDA). Asp208 is a 5-phospho-alpha-D-ribose 1-diphosphate binding site.

It belongs to the UPRTase family. The cofactor is Mg(2+).

The enzyme catalyses UMP + diphosphate = 5-phospho-alpha-D-ribose 1-diphosphate + uracil. The protein operates within pyrimidine metabolism; UMP biosynthesis via salvage pathway; UMP from uracil: step 1/1. With respect to regulation, allosterically activated by GTP. Its function is as follows. Catalyzes the conversion of uracil and 5-phospho-alpha-D-ribose 1-diphosphate (PRPP) to UMP and diphosphate. In Synechococcus elongatus (strain ATCC 33912 / PCC 7942 / FACHB-805) (Anacystis nidulans R2), this protein is Uracil phosphoribosyltransferase.